Consider the following 156-residue polypeptide: Probable succinate transporter subunit YjjB (156 aa).

A run of 4 helical transmembrane segments spans residues 7 to 27 (WALLQDMVLAAIPALGFAMVF), 54 to 74 (FGMDIEPASLLASIMIGMIGI), 86 to 106 (VFTVAAVIPMFPGISAYTAMI), and 128 to 148 (FLKASFIVGSLSIGLSLPGLW).

It belongs to the ThrE exporter (TC 2.A.79) family. In terms of assembly, the transporter is composed of YjjB and YjjP.

The protein resides in the cell inner membrane. Functionally, involved in succinate export with YjjP. Both proteins are required for export. The sequence is that of Probable succinate transporter subunit YjjB from Yersinia enterocolitica serotype O:8 / biotype 1B (strain NCTC 13174 / 8081).